A 170-amino-acid polypeptide reads, in one-letter code: ISSEKVVPASADPADTQRMIRYEIKQIKMFKGFEKIKDVQYIYTPFDSSLCGVKLEANSQKQYLLTGQVLSDGKVFIHLCNYIEPWEDLSLVQRESLNHHYHLNCVCQITTCYTVPCTISAPNECLWTDWLLERKLYGYQAQHYVCMKHADGTCSWYQGRLPLRKEFVDI.

The NTR domain maps to 1–105 (ISSEKVVPAS…SLNHHYHLNC (105 aa)). Involved in metalloproteinase-binding stretches follow at residues 6 to 9 (VVPA) and 48 to 49 (SS). 3 cysteine pairs are disulfide-bonded: Cys107–Cys154, Cys112–Cys117, and Cys125–Cys146.

Belongs to the protease inhibitor I35 (TIMP) family.

The protein resides in the secreted. Functionally, complexes with metalloproteinases (such as collagenases) and irreversibly inactivates them by binding to their catalytic zinc cofactor. The sequence is that of Metalloproteinase inhibitor 4 (TIMP4) from Oryctolagus cuniculus (Rabbit).